The sequence spans 343 residues: Anthranilate phosphoribosyltransferase (343 aa).

Residues Gly-84, 87-88 (GD), Thr-92, 94-97 (NIST), 112-120 (KHGNRGVSS), and Ser-124 contribute to the 5-phospho-alpha-D-ribose 1-diphosphate site. Gly-84 is an anthranilate binding site. Ser-96 is a binding site for Mg(2+). Asn-115 is an anthranilate binding site. Arg-170 provides a ligand contact to anthranilate. Residues Asp-229 and Glu-230 each contribute to the Mg(2+) site.

This sequence belongs to the anthranilate phosphoribosyltransferase family. In terms of assembly, homodimer. Mg(2+) is required as a cofactor.

It carries out the reaction N-(5-phospho-beta-D-ribosyl)anthranilate + diphosphate = 5-phospho-alpha-D-ribose 1-diphosphate + anthranilate. It participates in amino-acid biosynthesis; L-tryptophan biosynthesis; L-tryptophan from chorismate: step 2/5. Its function is as follows. Catalyzes the transfer of the phosphoribosyl group of 5-phosphorylribose-1-pyrophosphate (PRPP) to anthranilate to yield N-(5'-phosphoribosyl)-anthranilate (PRA). The sequence is that of Anthranilate phosphoribosyltransferase from Burkholderia orbicola (strain AU 1054).